Here is a 296-residue protein sequence, read N- to C-terminus: Zinc finger CCCH-type antiviral protein 1-like (296 aa).

Ala2 carries the N-acetylalanine modification. 2 C3H1-type zinc fingers span residues 111-136 (LCRR…HDIH) and 198-219 (VCKS…HQLI).

The chain is Zinc finger CCCH-type antiviral protein 1-like (Zc3hav1l) from Mus musculus (Mouse).